The sequence spans 356 residues: Dual-specificity RNA methyltransferase RlmN (356 aa).

The active-site Proton acceptor is E95. One can recognise a Radical SAM core domain in the interval 101–332 (EDERGTLCIS…VTVIRDRRGE (232 aa)). A disulfide bridge links C108 with C338. The [4Fe-4S] cluster site is built by C115, C119, and C122. Residues 165 to 166 (GE), S197, 219 to 221 (SLH), and N295 each bind S-adenosyl-L-methionine. C338 (S-methylcysteine intermediate) is an active-site residue.

Belongs to the radical SAM superfamily. RlmN family. [4Fe-4S] cluster serves as cofactor.

The protein localises to the cytoplasm. It carries out the reaction adenosine(2503) in 23S rRNA + 2 reduced [2Fe-2S]-[ferredoxin] + 2 S-adenosyl-L-methionine = 2-methyladenosine(2503) in 23S rRNA + 5'-deoxyadenosine + L-methionine + 2 oxidized [2Fe-2S]-[ferredoxin] + S-adenosyl-L-homocysteine. The catalysed reaction is adenosine(37) in tRNA + 2 reduced [2Fe-2S]-[ferredoxin] + 2 S-adenosyl-L-methionine = 2-methyladenosine(37) in tRNA + 5'-deoxyadenosine + L-methionine + 2 oxidized [2Fe-2S]-[ferredoxin] + S-adenosyl-L-homocysteine. Specifically methylates position 2 of adenine 2503 in 23S rRNA and position 2 of adenine 37 in tRNAs. m2A2503 modification seems to play a crucial role in the proofreading step occurring at the peptidyl transferase center and thus would serve to optimize ribosomal fidelity. The polypeptide is Dual-specificity RNA methyltransferase RlmN (Magnetococcus marinus (strain ATCC BAA-1437 / JCM 17883 / MC-1)).